Consider the following 206-residue polypeptide: N-(5'-phosphoribosyl)anthranilate isomerase (206 aa).

It belongs to the TrpF family.

It carries out the reaction N-(5-phospho-beta-D-ribosyl)anthranilate = 1-(2-carboxyphenylamino)-1-deoxy-D-ribulose 5-phosphate. It functions in the pathway amino-acid biosynthesis; L-tryptophan biosynthesis; L-tryptophan from chorismate: step 3/5. This chain is N-(5'-phosphoribosyl)anthranilate isomerase, found in Pseudomonas savastanoi pv. phaseolicola (strain 1448A / Race 6) (Pseudomonas syringae pv. phaseolicola (strain 1448A / Race 6)).